We begin with the raw amino-acid sequence, 361 residues long: Histidinol-phosphate aminotransferase (361 aa).

Residue Lys224 is modified to N6-(pyridoxal phosphate)lysine.

The protein belongs to the class-II pyridoxal-phosphate-dependent aminotransferase family. Histidinol-phosphate aminotransferase subfamily. In terms of assembly, homodimer. Pyridoxal 5'-phosphate is required as a cofactor.

It carries out the reaction L-histidinol phosphate + 2-oxoglutarate = 3-(imidazol-4-yl)-2-oxopropyl phosphate + L-glutamate. It participates in amino-acid biosynthesis; L-histidine biosynthesis; L-histidine from 5-phospho-alpha-D-ribose 1-diphosphate: step 7/9. In Bacillus licheniformis (strain ATCC 14580 / DSM 13 / JCM 2505 / CCUG 7422 / NBRC 12200 / NCIMB 9375 / NCTC 10341 / NRRL NRS-1264 / Gibson 46), this protein is Histidinol-phosphate aminotransferase.